Consider the following 133-residue polypeptide: Small ribosomal subunit protein uS8 (133 aa).

Belongs to the universal ribosomal protein uS8 family. As to quaternary structure, part of the 30S ribosomal subunit. Contacts proteins S5 and S12.

One of the primary rRNA binding proteins, it binds directly to 16S rRNA central domain where it helps coordinate assembly of the platform of the 30S subunit. The sequence is that of Small ribosomal subunit protein uS8 from Chlamydia trachomatis serovar L2b (strain UCH-1/proctitis).